A 172-amino-acid chain; its full sequence is Cytochrome c oxidase subunit 4 isoform 2, mitochondrial (172 aa).

A mitochondrion-targeting transit peptide spans 1–34; that stretch reads MFSRAARSLVMRTGLRTRGTGTHSPGDAAGSQRR. Residues 13 to 22 show a composition bias toward low complexity; the sequence is TGLRTRGTGT. Positions 13 to 32 are disordered; it reads TGLRTRGTGTHSPGDAAGSQ. At 35-101 the chain is on the mitochondrial matrix side; sequence MTPYVDCYAQ…TFAEMNHRSN (67 aa). Residues 102 to 127 traverse the membrane as a helical segment; it reads EWKTVMGCVFFFIGFTALVIWWQRVY. Residues 128 to 172 are Mitochondrial intermembrane-facing; it reads VFPKKVVTLTEERKAQQLQRLLDMKSNPIQGLAAHWDYEKKEWKK.

It belongs to the cytochrome c oxidase IV family. Component of the cytochrome c oxidase (complex IV, CIV), a multisubunit enzyme composed of 14 subunits. The complex is composed of a catalytic core of 3 subunits MT-CO1, MT-CO2 and MT-CO3, encoded in the mitochondrial DNA, and 11 supernumerary subunits COX4I, COX5A, COX5B, COX6A, COX6B, COX6C, COX7A, COX7B, COX7C, COX8 and NDUFA4, which are encoded in the nuclear genome. The complex exists as a monomer or a dimer and forms supercomplexes (SCs) in the inner mitochondrial membrane with NADH-ubiquinone oxidoreductase (complex I, CI) and ubiquinol-cytochrome c oxidoreductase (cytochrome b-c1 complex, complex III, CIII), resulting in different assemblies (supercomplex SCI(1)III(2)IV(1) and megacomplex MCI(2)III(2)IV(2)).

The protein localises to the mitochondrion inner membrane. Its pathway is energy metabolism; oxidative phosphorylation. Its function is as follows. Component of the cytochrome c oxidase, the last enzyme in the mitochondrial electron transport chain which drives oxidative phosphorylation. The respiratory chain contains 3 multisubunit complexes succinate dehydrogenase (complex II, CII), ubiquinol-cytochrome c oxidoreductase (cytochrome b-c1 complex, complex III, CIII) and cytochrome c oxidase (complex IV, CIV), that cooperate to transfer electrons derived from NADH and succinate to molecular oxygen, creating an electrochemical gradient over the inner membrane that drives transmembrane transport and the ATP synthase. Cytochrome c oxidase is the component of the respiratory chain that catalyzes the reduction of oxygen to water. Electrons originating from reduced cytochrome c in the intermembrane space (IMS) are transferred via the dinuclear copper A center (CU(A)) of subunit 2 and heme A of subunit 1 to the active site in subunit 1, a binuclear center (BNC) formed by heme A3 and copper B (CU(B)). The BNC reduces molecular oxygen to 2 water molecules using 4 electrons from cytochrome c in the IMS and 4 protons from the mitochondrial matrix. In Mus musculus (Mouse), this protein is Cytochrome c oxidase subunit 4 isoform 2, mitochondrial (Cox4i2).